The chain runs to 493 residues: Aspartyl/glutamyl-tRNA(Asn/Gln) amidotransferase subunit B (493 aa).

Belongs to the GatB/GatE family. GatB subfamily. Heterotrimer of A, B and C subunits.

It catalyses the reaction L-glutamyl-tRNA(Gln) + L-glutamine + ATP + H2O = L-glutaminyl-tRNA(Gln) + L-glutamate + ADP + phosphate + H(+). The enzyme catalyses L-aspartyl-tRNA(Asn) + L-glutamine + ATP + H2O = L-asparaginyl-tRNA(Asn) + L-glutamate + ADP + phosphate + 2 H(+). Functionally, allows the formation of correctly charged Asn-tRNA(Asn) or Gln-tRNA(Gln) through the transamidation of misacylated Asp-tRNA(Asn) or Glu-tRNA(Gln) in organisms which lack either or both of asparaginyl-tRNA or glutaminyl-tRNA synthetases. The reaction takes place in the presence of glutamine and ATP through an activated phospho-Asp-tRNA(Asn) or phospho-Glu-tRNA(Gln). The polypeptide is Aspartyl/glutamyl-tRNA(Asn/Gln) amidotransferase subunit B (Aromatoleum aromaticum (strain DSM 19018 / LMG 30748 / EbN1) (Azoarcus sp. (strain EbN1))).